The sequence spans 287 residues: MNTVKTVRELRAAVARARGEGKRIGFVPTMGNLHSGHAALVTKAAQRADFVVASIFVNPLQFGANEDLDKYPRTLAADQERLLQAGCNLLFAPAVEEMYPDGMSVQTRVSVPQLSEGLCGASRPGHFEGVATVVSKLFNMVQPDLAVFGEKDFQQLAVIRAMVRDLNMPIQIIGEPTVRADDGLALSSRNGYLTPEQRTAAPALYRTLQHIAAGIGRGQRDFAALVAEGQAQLSAAGFRPDYLEVRHAVSLRPALIDDRDLVVIAAAYLGNTRLIDNLYLHLEEKTA.

30 to 37 contributes to the ATP binding site; it reads MGNLHSGH. The active-site Proton donor is the H37. Q61 lines the (R)-pantoate pocket. A beta-alanine-binding site is contributed by Q61. 149-152 lines the ATP pocket; sequence GEKD. A (R)-pantoate-binding site is contributed by Q155. ATP contacts are provided by residues V178 and 186–189; that span reads LSSR.

This sequence belongs to the pantothenate synthetase family. Homodimer.

The protein resides in the cytoplasm. The catalysed reaction is (R)-pantoate + beta-alanine + ATP = (R)-pantothenate + AMP + diphosphate + H(+). Its pathway is cofactor biosynthesis; (R)-pantothenate biosynthesis; (R)-pantothenate from (R)-pantoate and beta-alanine: step 1/1. In terms of biological role, catalyzes the condensation of pantoate with beta-alanine in an ATP-dependent reaction via a pantoyl-adenylate intermediate. The polypeptide is Pantothenate synthetase (Pseudomonas putida (strain GB-1)).